The following is an 81-amino-acid chain: Cytotoxin (81 aa).

An N-terminal signal peptide occupies residues Met-1–Thr-21. 4 disulfides stabilise this stretch: Cys-24–Cys-42, Cys-35–Cys-59, Cys-63–Cys-74, and Cys-75–Cys-80.

It belongs to the three-finger toxin family. Short-chain subfamily. Type IA cytotoxin sub-subfamily. As to quaternary structure, monomer in solution; Homodimer and oligomer in the presence of negatively charged lipids forming a pore with a size ranging between 20 and 30 Angstroms. In terms of tissue distribution, expressed by the venom gland.

It is found in the secreted. It localises to the target cell membrane. In terms of biological role, shows cytolytic activity on many different cells by forming pore in lipid membranes. In vivo, increases heart rate or kills the animal by cardiac arrest. In addition, it binds to heparin with high affinity, interacts with Kv channel-interacting protein 1 (KCNIP1) in a calcium-independent manner, and binds to integrin alpha-V/beta-3 (ITGAV/ITGB3) with moderate affinity. The sequence is that of Cytotoxin from Naja sputatrix (Malayan spitting cobra).